The chain runs to 345 residues: Beta-2-glycoprotein 1 (345 aa).

The signal sequence occupies residues 1-19 (MVSPVLALFSAFLCHVAIA). 4 Sushi domains span residues 21–81 (RICP…RCVP), 82–139 (RVCP…ACAR), 140–202 (ITCP…ECLE), and 203–262 (VKCP…TCRE). Disulfide bonds link Cys23/Cys66, Cys51/Cys79, Cys84/Cys124, Cys110/Cys137, Cys142/Cys188, Cys174/Cys200, Cys205/Cys248, Cys234/Cys260, Cys264/Cys315, Cys300/Cys325, and Cys307/Cys345. O-linked (GalNAc...) threonine glycosylation occurs at Thr33. Asn105, Asn117, Asn162, Asn183, and Asn193 each carry an N-linked (GlcNAc...) asparagine glycan. The sushi-like stretch occupies residues 263 to 345 (SCKLPVKKAT…KTDASELTPC (83 aa)).

In terms of tissue distribution, expressed by the liver and secreted in plasma.

The protein resides in the secreted. Its function is as follows. Binds to various kinds of negatively charged substances such as heparin, phospholipids, and dextran sulfate. May prevent activation of the intrinsic blood coagulation cascade by binding to phospholipids on the surface of damaged cells. The polypeptide is Beta-2-glycoprotein 1 (Apoh) (Mus musculus (Mouse)).